The chain runs to 461 residues: Coronin-1A (461 aa).

S2 carries the N-acetylserine modification. Phosphoserine; by PKC is present on S2. WD repeat units lie at residues 13 to 63, 73 to 110, 123 to 160, 164 to 204, 207 to 251, 258 to 296, and 302 to 349; these read HVFG…LVLP, NVPLVCGHTAPVLDIAWCPHNDNVIASGSEDCTVMVWE, PVITLEGHTKRVGIVAWHPTAQNVLLSAGCDNVILVWD, GAAV…RVIE, KGTV…ALWD, PLSLQELDTSSGVLLPFFDPDTNIVYLCGKGDSSIRYFE, and PFLH…EPIA. Residues 403-418 show a composition bias toward basic and acidic residues; the sequence is ELRVNRGLDSARRRAT. A disordered region spans residues 403–434; the sequence is ELRVNRGLDSARRRATPEPSGTPSSDTVSRLE. A Phosphoserine; by PKC modification is found at S412. T418 carries the phosphothreonine modification. Positions 421 to 430 are enriched in polar residues; it reads PSGTPSSDTV. The residue at position 422 (S422) is a Phosphoserine. The stretch at 424 to 461 forms a coiled coil; that stretch reads TPSSDTVSRLEEDVRNLNAIVQKLQERLDRLEETVQAK.

The protein belongs to the WD repeat coronin family. Binds actin. In terms of processing, phosphorylation at Ser-412 by PKC strongly down-regulates the association with actin. Polyubiquitinated by RNF128 with 'Lys-48'-linked chains, leading to proteasomal degradation. In terms of tissue distribution, expressed in spleen, lymph nodes, thymus, brain and at very lower levels in lung. Also expressed in cells of the lymphoid/myeloid lineage. Not expressed in Kuffper cells.

Its subcellular location is the cytoplasm. The protein resides in the cytoskeleton. It localises to the cell cortex. It is found in the cytoplasmic vesicle. The protein localises to the phagosome membrane. In terms of biological role, may be a crucial component of the cytoskeleton of highly motile cells, functioning both in the invagination of large pieces of plasma membrane, as well as in forming protrusions of the plasma membrane involved in cell locomotion. In mycobacteria-infected cells, its retention on the phagosomal membrane prevents fusion between phagosomes and lysosomes. The sequence is that of Coronin-1A (Coro1a) from Mus musculus (Mouse).